Reading from the N-terminus, the 150-residue chain is UPF0201 protein APE_1751 (150 aa).

The protein belongs to the UPF0201 family.

This Aeropyrum pernix (strain ATCC 700893 / DSM 11879 / JCM 9820 / NBRC 100138 / K1) protein is UPF0201 protein APE_1751.